Consider the following 311-residue polypeptide: MILQDFEKKIFKFIRDYKIFNKYDKILLGVSGGKDSMSLLHVMSKLSKTMGFEISVAHLNHCMREEADNDEAFVRQACWKLKIPFFSKKVDVFTYSKKNKVGVEVAGRKLRYEFFYETLRRLSYNKIATAHHMDDLFETMIYRILRGTGIYGLGGLIPIEEEITKPMLCVDLEEIKNYVTINNIEYVEDKYNYSLDYARNKIRYEITPLFKKINPRYKESFFRLAKIIWSYREEVKRKFEERSEISKDSLKLRLENDFFDGEIIRIAFLKFGKYPPNMEETEKIIKMRKGGVRKINGLSITKKSDSLLVKI.

ATP is bound at residue 31–36; sequence SGGKDS.

Belongs to the tRNA(Ile)-lysidine synthase family.

The protein localises to the cytoplasm. It carries out the reaction cytidine(34) in tRNA(Ile2) + L-lysine + ATP = lysidine(34) in tRNA(Ile2) + AMP + diphosphate + H(+). Functionally, ligates lysine onto the cytidine present at position 34 of the AUA codon-specific tRNA(Ile) that contains the anticodon CAU, in an ATP-dependent manner. Cytidine is converted to lysidine, thus changing the amino acid specificity of the tRNA from methionine to isoleucine. The polypeptide is tRNA(Ile)-lysidine synthase (Petrotoga mobilis (strain DSM 10674 / SJ95)).